A 92-amino-acid chain; its full sequence is Large ribosomal subunit protein eL43 (92 aa).

Zn(2+)-binding residues include Cys39, Cys42, Cys57, and Cys60. The segment at 39–60 adopts a C4-type zinc-finger fold; sequence CSFCGKTKMKRRAVGIWHCGSC.

It belongs to the eukaryotic ribosomal protein eL43 family. In terms of assembly, component of the large ribosomal subunit.

It localises to the cytoplasm. In terms of biological role, component of the large ribosomal subunit. The ribosome is a large ribonucleoprotein complex responsible for the synthesis of proteins in the cell. In Ictalurus punctatus (Channel catfish), this protein is Large ribosomal subunit protein eL43 (rpl37a).